A 152-amino-acid chain; its full sequence is Ubiquitin-conjugating enzyme E2 2 (152 aa).

In terms of domain architecture, UBC core spans 4–150 (PARKRLMRDF…VREVVEQSWT (147 aa)). The active-site Glycyl thioester intermediate is cysteine 88.

The protein belongs to the ubiquitin-conjugating enzyme family. As to expression, expressed in all tissues examined. Lower levels found in leaves.

The enzyme catalyses S-ubiquitinyl-[E1 ubiquitin-activating enzyme]-L-cysteine + [E2 ubiquitin-conjugating enzyme]-L-cysteine = [E1 ubiquitin-activating enzyme]-L-cysteine + S-ubiquitinyl-[E2 ubiquitin-conjugating enzyme]-L-cysteine.. The protein operates within protein modification; protein ubiquitination. Functionally, accepts the ubiquitin from the E1 complex and catalyzes its covalent attachment to other proteins. The sequence is that of Ubiquitin-conjugating enzyme E2 2 (UBC2) from Arabidopsis thaliana (Mouse-ear cress).